A 635-amino-acid polypeptide reads, in one-letter code: DNA-directed RNA polymerase subunit gamma (635 aa).

Zn(2+) contacts are provided by Cys-74, Cys-76, Cys-89, and Cys-92. Residues Asp-471, Asp-473, and Asp-475 each contribute to the Mg(2+) site.

Belongs to the RNA polymerase beta' chain family. RpoC1 subfamily. In cyanobacteria the RNAP catalytic core is composed of 2 alpha, 1 beta, 1 beta', 1 gamma and 1 omega subunit. When a sigma factor is associated with the core the holoenzyme is formed, which can initiate transcription. The cofactor is Mg(2+). Zn(2+) is required as a cofactor.

It catalyses the reaction RNA(n) + a ribonucleoside 5'-triphosphate = RNA(n+1) + diphosphate. DNA-dependent RNA polymerase catalyzes the transcription of DNA into RNA using the four ribonucleoside triphosphates as substrates. This Prochlorococcus marinus (strain NATL2A) protein is DNA-directed RNA polymerase subunit gamma.